Here is a 417-residue protein sequence, read N- to C-terminus: Inner membrane transport protein YnfM (417 aa).

Positions 1 to 22 (MSRTTTVDGAPASDTDKQSISQ) are disordered. Over 1 to 38 (MSRTTTVDGAPASDTDKQSISQPNQFIKRGTPQFMRVT) the chain is Periplasmic. Residues 39–59 (LALFSAGLATFALLYCVQPIL) traverse the membrane as a helical segment. Topologically, residues 60–73 (PVLSQEFGLTPANS) are cytoplasmic. A helical transmembrane segment spans residues 74 to 94 (SISLSISTAMLAIGLLFTGPL). The Periplasmic portion of the chain corresponds to 95-101 (SDAIGRK). A helical transmembrane segment spans residues 102-122 (PVMVTALLLASICTLLSTMMT). Over 123 to 125 (SWH) the chain is Cytoplasmic. Residues 126–146 (GILIMRALIGLSLSGVAAVGM) traverse the membrane as a helical segment. Residues 147–152 (TYLSEE) lie on the Periplasmic side of the membrane. A helical transmembrane segment spans residues 153 to 173 (IHPSFVAFSMGLYISGNSIGG). At 174-190 (MSGRLISGVFTDFFNWR) the chain is on the cytoplasmic side. A helical membrane pass occupies residues 191–211 (IALAAIGCFALASALMFWKIL). Residues 212–241 (PESRHFRPTSLRPKTLFINFRLHWRDRGLP) are Periplasmic-facing. A helical membrane pass occupies residues 242–262 (LLFAEGFLLMGSFVTLFNYIG). Over 263–264 (YR) the chain is Cytoplasmic. The chain crosses the membrane as a helical span at residues 265–285 (LMLSPWHVSQAVVGLLSLAYL). At 286–315 (TGTWSSPKAGTMTTRYGRGPVMLFSTGVML) the chain is on the periplasmic side. A helical membrane pass occupies residues 316–336 (FGLLMTLFSSLWLIFAGMLLF). The Cytoplasmic portion of the chain corresponds to 337 to 364 (SAGFFAAHSVASSWIGPRAKRAKGQASS). Residues 365–385 (LYLFSYYLGSSIAGTLGGVFW) traverse the membrane as a helical segment. Residues 386–387 (HN) lie on the Periplasmic side of the membrane. A helical membrane pass occupies residues 388–408 (YGWNGVGAFIALMLVIALLVG). Residues 409-417 (TRLHRRLHA) lie on the Cytoplasmic side of the membrane.

This sequence belongs to the major facilitator superfamily.

The protein resides in the cell inner membrane. This is Inner membrane transport protein YnfM (ynfM) from Escherichia coli (strain K12).